We begin with the raw amino-acid sequence, 289 residues long: tRNA-cytidine(32) 2-sulfurtransferase (289 aa).

A PP-loop motif motif is present at residues 49-54 (SGGKDS). [4Fe-4S] cluster contacts are provided by Cys-124, Cys-127, and Cys-215.

The protein belongs to the TtcA family. Homodimer. It depends on Mg(2+) as a cofactor. [4Fe-4S] cluster serves as cofactor.

The protein localises to the cytoplasm. The catalysed reaction is cytidine(32) in tRNA + S-sulfanyl-L-cysteinyl-[cysteine desulfurase] + AH2 + ATP = 2-thiocytidine(32) in tRNA + L-cysteinyl-[cysteine desulfurase] + A + AMP + diphosphate + H(+). It participates in tRNA modification. In terms of biological role, catalyzes the ATP-dependent 2-thiolation of cytidine in position 32 of tRNA, to form 2-thiocytidine (s(2)C32). The sulfur atoms are provided by the cysteine/cysteine desulfurase (IscS) system. The polypeptide is tRNA-cytidine(32) 2-sulfurtransferase (Methylococcus capsulatus (strain ATCC 33009 / NCIMB 11132 / Bath)).